The chain runs to 275 residues: Large ribosomal subunit protein uL2 (275 aa).

Positions 224 to 275 are disordered; that stretch reads AMNPVDHPHGGGEGKAPIGHPGPLTPWGKPALGYKTRKKGKASDKFIIRRRK. A compositionally biased stretch (basic and acidic residues) spans 264 to 275; sequence KASDKFIIRRRK.

The protein belongs to the universal ribosomal protein uL2 family. In terms of assembly, part of the 50S ribosomal subunit. Forms a bridge to the 30S subunit in the 70S ribosome.

Functionally, one of the primary rRNA binding proteins. Required for association of the 30S and 50S subunits to form the 70S ribosome, for tRNA binding and peptide bond formation. It has been suggested to have peptidyltransferase activity; this is somewhat controversial. Makes several contacts with the 16S rRNA in the 70S ribosome. In Thermoanaerobacter pseudethanolicus (strain ATCC 33223 / 39E) (Clostridium thermohydrosulfuricum), this protein is Large ribosomal subunit protein uL2.